The chain runs to 133 residues: Small ribosomal subunit protein uS11 (133 aa).

Positions 1-23 (MPPKTRGAVRKPRKKDKKNIALG) are disordered. A compositionally biased stretch (basic residues) spans 7–17 (GAVRKPRKKDK).

It belongs to the universal ribosomal protein uS11 family. As to quaternary structure, part of the 30S ribosomal subunit. Interacts with proteins S7 and S18. Binds to IF-3.

Functionally, located on the platform of the 30S subunit, it bridges several disparate RNA helices of the 16S rRNA. Forms part of the Shine-Dalgarno cleft in the 70S ribosome. The sequence is that of Small ribosomal subunit protein uS11 from Pseudarthrobacter chlorophenolicus (strain ATCC 700700 / DSM 12829 / CIP 107037 / JCM 12360 / KCTC 9906 / NCIMB 13794 / A6) (Arthrobacter chlorophenolicus).